A 128-amino-acid polypeptide reads, in one-letter code: Aspartate 1-decarboxylase (128 aa).

Ser25 acts as the Schiff-base intermediate with substrate; via pyruvic acid in catalysis. Ser25 carries the post-translational modification Pyruvic acid (Ser). Thr57 lines the substrate pocket. Tyr58 serves as the catalytic Proton donor. 73-75 (GAA) contacts substrate.

This sequence belongs to the PanD family. Heterooctamer of four alpha and four beta subunits. It depends on pyruvate as a cofactor. Is synthesized initially as an inactive proenzyme, which is activated by self-cleavage at a specific serine bond to produce a beta-subunit with a hydroxyl group at its C-terminus and an alpha-subunit with a pyruvoyl group at its N-terminus.

The protein localises to the cytoplasm. The catalysed reaction is L-aspartate + H(+) = beta-alanine + CO2. Its pathway is cofactor biosynthesis; (R)-pantothenate biosynthesis; beta-alanine from L-aspartate: step 1/1. Its function is as follows. Catalyzes the pyruvoyl-dependent decarboxylation of aspartate to produce beta-alanine. The sequence is that of Aspartate 1-decarboxylase from Chlorobium limicola (strain DSM 245 / NBRC 103803 / 6330).